Here is a 315-residue protein sequence, read N- to C-terminus: 4-hydroxy-3-methylbut-2-enyl diphosphate reductase (315 aa).

Cys-12 contributes to the [4Fe-4S] cluster binding site. The (2E)-4-hydroxy-3-methylbut-2-enyl diphosphate site is built by His-41 and His-74. Residues His-41 and His-74 each contribute to the dimethylallyl diphosphate site. Isopentenyl diphosphate is bound by residues His-41 and His-74. Cys-96 serves as a coordination point for [4Fe-4S] cluster. His-124 contacts (2E)-4-hydroxy-3-methylbut-2-enyl diphosphate. His-124 contacts dimethylallyl diphosphate. His-124 is a binding site for isopentenyl diphosphate. Catalysis depends on Glu-126, which acts as the Proton donor. Thr-168 contacts (2E)-4-hydroxy-3-methylbut-2-enyl diphosphate. Residue Cys-198 coordinates [4Fe-4S] cluster. Residues Ser-226, Ser-227, Asn-228, and Ser-270 each coordinate (2E)-4-hydroxy-3-methylbut-2-enyl diphosphate. Dimethylallyl diphosphate is bound by residues Ser-226, Ser-227, Asn-228, and Ser-270. The isopentenyl diphosphate site is built by Ser-226, Ser-227, Asn-228, and Ser-270.

The protein belongs to the IspH family. It depends on [4Fe-4S] cluster as a cofactor.

It catalyses the reaction isopentenyl diphosphate + 2 oxidized [2Fe-2S]-[ferredoxin] + H2O = (2E)-4-hydroxy-3-methylbut-2-enyl diphosphate + 2 reduced [2Fe-2S]-[ferredoxin] + 2 H(+). The enzyme catalyses dimethylallyl diphosphate + 2 oxidized [2Fe-2S]-[ferredoxin] + H2O = (2E)-4-hydroxy-3-methylbut-2-enyl diphosphate + 2 reduced [2Fe-2S]-[ferredoxin] + 2 H(+). It functions in the pathway isoprenoid biosynthesis; dimethylallyl diphosphate biosynthesis; dimethylallyl diphosphate from (2E)-4-hydroxy-3-methylbutenyl diphosphate: step 1/1. The protein operates within isoprenoid biosynthesis; isopentenyl diphosphate biosynthesis via DXP pathway; isopentenyl diphosphate from 1-deoxy-D-xylulose 5-phosphate: step 6/6. Catalyzes the conversion of 1-hydroxy-2-methyl-2-(E)-butenyl 4-diphosphate (HMBPP) into a mixture of isopentenyl diphosphate (IPP) and dimethylallyl diphosphate (DMAPP). Acts in the terminal step of the DOXP/MEP pathway for isoprenoid precursor biosynthesis. The sequence is that of 4-hydroxy-3-methylbut-2-enyl diphosphate reductase from Pseudomonas putida (strain GB-1).